We begin with the raw amino-acid sequence, 260 residues long: Membrane protein insertase YidC 1 (260 aa).

The signal sequence occupies residues Met1–Gly22. Cys23 is lipidated: N-palmitoyl cysteine. Cys23 carries S-diacylglycerol cysteine lipidation. Transmembrane regions (helical) follow at residues Ile29–Ile49, Val52–Ile72, Leu133–Ile153, Phe164–Leu184, and Met213–Ile233.

It belongs to the OXA1/ALB3/YidC family. Type 2 subfamily.

It localises to the cell membrane. Functionally, required for the insertion and/or proper folding and/or complex formation of integral membrane proteins into the membrane. Involved in integration of membrane proteins that insert both dependently and independently of the Sec translocase complex, as well as at least some lipoproteins. This is Membrane protein insertase YidC 1 from Bacillus anthracis.